Reading from the N-terminus, the 920-residue chain is MKEYKDTLNLNATTFSMKGNLSVNEPKTYAKWQEQQAFKRMQARKDNHGDFTLHDGPPYANGHLHLGHALNKILKDIVVKREYFKGKKIYYTPGWDCHGLPIEQQILEQLEKEKTSLENPTLFREKCRDHAKKFLEIQKNEFLQLGVLGDFDDPYKTMDFKFEASIYRALVEVAKKGLLKERHKPIYWSYACESALAEAEVEYKMKKSPSIFVAFGLKKESLEKLKVKKASLVIWTTTPWTLYANVAIALKKDAIYALTQKGYLVAKALHEKLAALGVVDSEIVHEFNANDLEYLKALNPLNQRNSLITLGEHVGLEDGTGAVHTAPGHGEEDYYLGLKYNLEVLMSVDEKGCYDEGIIHNQLLDESYLGEHVFKAQKRIIEQLGDSLLLEQEIEHSYPHCWRTHKPVIYRATTQWFILMDEPFIQNDGSQKTLREVALDAIEKVEFVPNSGKNRLKIMIENRPDWCLSRQRKWGVPLAFFIDKRTNKPCFESEVLEHTAKLFEERGCDVWWEYSVKDLLPPNYQDNATYYEKVMHILDVWFDSGSTFKAVLEDYQGEKGQSPSDVVLEGSDQHRGWFQSSLLIGCILNNQAPFKKVITHGFIVDEKGEKMSKSKGNVVSLDKLLKTHGSDVVRLWVAFNDYQNDLRVSQTFFTQTEQHYKKFRNTLKFLLANFSDMDLKNLERSHNFSPLDHFILESLETISAGVNSAFEEHDFVKGLNVLMAFVTNELSGIYLDACKDSLYCDSKNNEKRQAIQMVLLATASKLCYFLAPILTHTIEEVLAHSQVLRIFLQAKDVFDLKDISVSEKLHLKEFKKPENFEAVLALRSAFNEELDRLKKEGVIKNSLECAIEVGEKALCENLVEELLMVSFVGIAREKLSETPAFTLFKAPFYKCPRCWRFKSELENAPCKRCEQVLKER.

The short motif at 58–68 (PYANGHLHLGH) is the 'HIGH' region element. Glutamate 569 lines the L-isoleucyl-5'-AMP pocket. A 'KMSKS' region motif is present at residues 610–614 (KMSKS). Lysine 613 is a binding site for ATP. Residues cysteine 895, cysteine 898, cysteine 910, and cysteine 913 each contribute to the Zn(2+) site.

The protein belongs to the class-I aminoacyl-tRNA synthetase family. IleS type 1 subfamily. Monomer. The cofactor is Zn(2+).

It localises to the cytoplasm. It carries out the reaction tRNA(Ile) + L-isoleucine + ATP = L-isoleucyl-tRNA(Ile) + AMP + diphosphate. Functionally, catalyzes the attachment of isoleucine to tRNA(Ile). As IleRS can inadvertently accommodate and process structurally similar amino acids such as valine, to avoid such errors it has two additional distinct tRNA(Ile)-dependent editing activities. One activity is designated as 'pretransfer' editing and involves the hydrolysis of activated Val-AMP. The other activity is designated 'posttransfer' editing and involves deacylation of mischarged Val-tRNA(Ile). This Helicobacter pylori (strain Shi470) protein is Isoleucine--tRNA ligase.